The chain runs to 624 residues: Ceramide transfer protein (624 aa).

Residues 1 to 11 (MSDNQSWNSSG) are compositionally biased toward polar residues. The tract at residues 1–24 (MSDNQSWNSSGSEEDPETESGPPV) is disordered. The PH domain occupies 23 to 117 (PVERCGVLSK…WIDAIEQHKT (95 aa)). S126 is subject to Phosphoserine. Phosphoserine; by PKD is present on S132. Phosphoserine is present on S135. Positions 263-303 (IELMVKREDSWQKRLDKETEKKRRTEEAYKNAMTELKKKSH) form a coiled coil. At S315 the chain carries Phosphoserine. Residues 321–327 (EFFDAVE) carry the FFAT motif. A Phosphotyrosine modification is found at Y372. A phosphoserine mark is found at S373, S377, and S380. Residues 389 to 618 (DVHRFSSQVE…FTSYVQEKTA (230 aa)) form the START domain. Positions 472, 493, 530, and 579 each coordinate an N-acylsphing-4-enine.

Interacts with VAPA and VAPB. Interaction with VAPB is less efficient than with VAPA. Interacts (via FFAT motif) with the MOSPD2 (via MSP domain). Post-translationally, phosphorylation on Ser-132 decreases the affinity toward phosphatidylinositol 4-phosphate at Golgi membranes and reduces ceramide transfer activity. Inactivated by hyperphosphorylation of serine residues by CSNK1G2/CK1 that triggers dissociation from the Golgi complex, thus down-regulating ER-to-Golgi transport of ceramide and sphingomyelin synthesis.

It is found in the cytoplasm. Its subcellular location is the golgi apparatus. It localises to the endoplasmic reticulum. It catalyses the reaction N-hexadecanoylsphing-4-enine(in) = N-hexadecanoylsphing-4-enine(out). Functionally, shelters ceramides and diacylglycerol lipids inside its START domain and mediates the intracellular trafficking of ceramides and diacylglycerol lipids in a non-vesicular manner. In Pongo abelii (Sumatran orangutan), this protein is Ceramide transfer protein (CERT1).